The following is a 340-amino-acid chain: MAATPWYFVAVLLTILTSSQGILTTLSQSDGGYKYDYATVPFLAEVFKLIISGLFLWREMRTSSSTTSRITTDWKSVRLFVIPSLIYLIHNNVQFATLTYVDTSTYQIMGNLKIVTTGILFRLFLKRKLSKLQWMAIGLLAVGTTTSQVKGCGEASCDSLFTAPIQGYLLGILSAGLSALAGIYTEFLMKRNNDTLYWQNLQLYTFGSLFNVARLIADDFRHGFEKGPWWQRIFDGYSITTWLVVLNLGSTGLLVSWLMKYADNIVKVYSTSMAMLLTMVASIYLFSFKPTLQLFLGIVICIMSLHMYFAPPHTLVDLPVTNEAHAKTLKQVVVEEKTDS.

The Cytoplasmic portion of the chain corresponds to 1 to 5 (MAATP). The helical transmembrane segment at 6-26 (WYFVAVLLTILTSSQGILTTL) threads the bilayer. The Lumenal segment spans residues 27–36 (SQSDGGYKYD). The chain crosses the membrane as a helical span at residues 37–57 (YATVPFLAEVFKLIISGLFLW). The Cytoplasmic portion of the chain corresponds to 58–78 (REMRTSSSTTSRITTDWKSVR). Residues 79-99 (LFVIPSLIYLIHNNVQFATLT) form a helical membrane-spanning segment. Residues 100 to 102 (YVD) lie on the Lumenal side of the membrane. The chain crosses the membrane as a helical span at residues 103–125 (TSTYQIMGNLKIVTTGILFRLFL). Topologically, residues 126 to 168 (KRKLSKLQWMAIGLLAVGTTTSQVKGCGEASCDSLFTAPIQGY) are cytoplasmic. A helical transmembrane segment spans residues 169 to 189 (LLGILSAGLSALAGIYTEFLM). At 190-200 (KRNNDTLYWQN) the chain is on the lumenal side. Residues 201 to 217 (LQLYTFGSLFNVARLIA) traverse the membrane as a helical segment. Over 218 to 238 (DDFRHGFEKGPWWQRIFDGYS) the chain is Cytoplasmic. The helical transmembrane segment at 239–259 (ITTWLVVLNLGSTGLLVSWLM) threads the bilayer. Over 260 to 282 (KYADNIVKVYSTSMAMLLTMVAS) the chain is Lumenal. A helical membrane pass occupies residues 283 to 303 (IYLFSFKPTLQLFLGIVICIM). Topologically, residues 304–340 (SLHMYFAPPHTLVDLPVTNEAHAKTLKQVVVEEKTDS) are cytoplasmic.

The protein belongs to the nucleotide-sugar transporter family. CMP-Sialate:CMP antiporter (TC 2.A.7.12) subfamily.

It localises to the golgi apparatus membrane. Its function is as follows. Essential protein. Sugar transporter involved in the transport of CMP-sialic acid from the cytoplasm into the Golgi. The protein is CMP-sialic acid transporter 1 of Arabidopsis thaliana (Mouse-ear cress).